Reading from the N-terminus, the 137-residue chain is Holo-[acyl-carrier-protein] synthase (137 aa).

Positions 8 and 57 each coordinate Mg(2+).

The protein belongs to the P-Pant transferase superfamily. AcpS family. Mg(2+) is required as a cofactor.

It is found in the cytoplasm. It carries out the reaction apo-[ACP] + CoA = holo-[ACP] + adenosine 3',5'-bisphosphate + H(+). In terms of biological role, transfers the 4'-phosphopantetheine moiety from coenzyme A to a Ser of acyl-carrier-protein. The protein is Holo-[acyl-carrier-protein] synthase of Cereibacter sphaeroides (strain ATCC 17023 / DSM 158 / JCM 6121 / CCUG 31486 / LMG 2827 / NBRC 12203 / NCIMB 8253 / ATH 2.4.1.) (Rhodobacter sphaeroides).